Reading from the N-terminus, the 61-residue chain is Insect toxin LqhIT5 (61 aa).

Residues 1–61 (DGYIRGGDGC…EWKYETNTCG (61 aa)) form the LCN-type CS-alpha/beta domain. 4 disulfides stabilise this stretch: C10–C60, C14–C35, C21–C42, and C25–C44.

It belongs to the long (4 C-C) scorpion toxin superfamily. Sodium channel inhibitor family. Beta subfamily. In terms of tissue distribution, expressed by the venom gland.

The protein resides in the secreted. In terms of biological role, excitatory insect beta-toxins induce a spastic paralysis. They bind voltage-independently at site-4 of sodium channels (Nav) and shift the voltage of activation toward more negative potentials thereby affecting sodium channel activation and promoting spontaneous and repetitive firing. This toxin is active only on insects. It operates by inducing a fast contraction paralysis without depressant activity. It is more similar to the excitatory toxins in its mode of action and the depressant toxins in its primary structure. This Leiurus hebraeus (Hebrew deathstalker scorpion) protein is Insect toxin LqhIT5.